The following is a 511-amino-acid chain: Cytochrome P450 monooxyhenase eriC (511 aa).

Residues 2-22 traverse the membrane as a helical segment; sequence VLADFISIPTVSIACLAVLGI. Cysteine 445 is a binding site for heme.

The protein belongs to the cytochrome P450 family. Heme is required as a cofactor.

The protein localises to the membrane. The enzyme catalyses erinacol + reduced [NADPH--hemoprotein reductase] + O2 = cyathadiol + oxidized [NADPH--hemoprotein reductase] + H2O + H(+). It participates in secondary metabolite biosynthesis. Its function is as follows. Cytochrome P450 monooxygenase; part of the gene cluster that mediates the biosynthesis of erinacines, cyathane-xylosides that show unique biological activities, including leishmanicidal activity, stimulating activity for nerve growth-factor synthesis, and agonistic activity toward the kappa opioid receptor. Within the pathway, eriC hydroxylates erinacol at C-15 of the seven-membered ring to yield cyathadiol. The first step of the erinacines biosynthesis pathway is catalyzed by the geranylgeranyl diphosphate (GGPP) synthase eriE via conversion of farnesyl pyrophosphate and isopentyl pyrophosphate into geranylgeranyl pyrophosphate (GGPP). GGPP is then substrate of the diterpene cyclase eriG for the production of cyatha-3,12-diene. The cytochrome P450 monooxygenase eriI then hydroxylates cyatha-3,12-diene at C-14 of the seven-membered ring to produce erinacol, which is further hydroxylated at C-15 by the cytochrome P450 monooxygenase eriC to yield cyathadiol. The cytochrome P450 monooxygenase eriA then catalyzes C-11 hydroxylation in the presence of the short chain dehydrogenase/reductase (SDR) eriH, which leads to the production of cyathatriol. The acetyltransferase eriL converts cyathatriol into 11-O-acetyl-cyathatriol. The SDR eriH catalyzes further oxidation of 11-O-acetyl-cyathatriol into 1-O-acetylcyathin A3. Finally, the glycosyl transferase eriJ tranfers xylose from UDP-xylose onto C-14 of 11-O-acetyl-cyathatriol to form eracine Q. EriJ is also able to convert 11-O-acetyl-cyathatriol to eracine Q2 by using UDP-D-glucose as cosubstrate, but at a lower rate. This Hericium erinaceus (Lion's mane mushroom) protein is Cytochrome P450 monooxyhenase eriC.